The sequence spans 677 residues: O-fucosyltransferase 27 (677 aa).

Residues 15-35 traverse the membrane as a helical; Signal-anchor for type II membrane protein segment; the sequence is WIGLLGLVLSAFSLLVHFLLA. N-linked (GlcNAc...) asparagine glycosylation occurs at Asn130. The segment at 410 to 437 is disordered; sequence PPSIEVETKHDSLKSTRQRPQPLPPPPA. Residues Asn542 and Asn592 are each glycosylated (N-linked (GlcNAc...) asparagine). The interval 619-677 is disordered; the sequence is NAEKEEDLDEEDLSSSGLFFGHKESGGNNNGNNETVNSEANNKEEGQLEDQEELEGSER. Over residues 622-631 the composition is skewed to acidic residues; it reads KEEDLDEEDL. Residues 644–658 are compositionally biased toward low complexity; that stretch reads GGNNNGNNETVNSEA. A glycan (N-linked (GlcNAc...) asparagine) is linked at Asn651. Residues 665 to 677 show a composition bias toward acidic residues; that stretch reads QLEDQEELEGSER.

The protein belongs to the glycosyltransferase GT106 family.

Its subcellular location is the membrane. It functions in the pathway glycan metabolism. The chain is O-fucosyltransferase 27 from Arabidopsis thaliana (Mouse-ear cress).